The following is a 270-amino-acid chain: Formamidopyrimidine-DNA glycosylase (270 aa).

P2 acts as the Schiff-base intermediate with DNA in catalysis. The Proton donor role is filled by E3. K58 functions as the Proton donor; for beta-elimination activity in the catalytic mechanism. DNA-binding residues include H91, R109, and R151. The FPG-type zinc finger occupies 236–270; sequence LVYGRGGEACKTCQKPLKEIRMNDRTTVYCVTCQQ. R260 functions as the Proton donor; for delta-elimination activity in the catalytic mechanism.

Belongs to the FPG family. Monomer. It depends on Zn(2+) as a cofactor.

The enzyme catalyses Hydrolysis of DNA containing ring-opened 7-methylguanine residues, releasing 2,6-diamino-4-hydroxy-5-(N-methyl)formamidopyrimidine.. It carries out the reaction 2'-deoxyribonucleotide-(2'-deoxyribose 5'-phosphate)-2'-deoxyribonucleotide-DNA = a 3'-end 2'-deoxyribonucleotide-(2,3-dehydro-2,3-deoxyribose 5'-phosphate)-DNA + a 5'-end 5'-phospho-2'-deoxyribonucleoside-DNA + H(+). In terms of biological role, involved in base excision repair of DNA damaged by oxidation or by mutagenic agents. Acts as a DNA glycosylase that recognizes and removes damaged bases. Has a preference for oxidized purines, such as 7,8-dihydro-8-oxoguanine (8-oxoG). Has AP (apurinic/apyrimidinic) lyase activity and introduces nicks in the DNA strand. Cleaves the DNA backbone by beta-delta elimination to generate a single-strand break at the site of the removed base with both 3'- and 5'-phosphates. In Cellvibrio japonicus (strain Ueda107) (Pseudomonas fluorescens subsp. cellulosa), this protein is Formamidopyrimidine-DNA glycosylase.